A 128-amino-acid polypeptide reads, in one-letter code: Small ribosomal subunit protein uS11 (128 aa).

Belongs to the universal ribosomal protein uS11 family. In terms of assembly, part of the 30S ribosomal subunit. Interacts with proteins S7 and S18. Binds to IF-3.

In terms of biological role, located on the platform of the 30S subunit, it bridges several disparate RNA helices of the 16S rRNA. Forms part of the Shine-Dalgarno cleft in the 70S ribosome. This chain is Small ribosomal subunit protein uS11, found in Ligilactobacillus salivarius (strain UCC118) (Lactobacillus salivarius).